Consider the following 147-residue polypeptide: Deoxyuridine 5'-triphosphate nucleotidohydrolase (147 aa).

Arg24 serves as a coordination point for Mg(2+). Residues 68-70 (PRS), 82-85 (GVID), Tyr88, Gly93, Ile95, and Arg111 each bind dUTP.

This sequence belongs to the dUTPase family. Mg(2+) is required as a cofactor.

It catalyses the reaction dUTP + H2O = dUMP + diphosphate + H(+). Functionally, this enzyme is involved in nucleotide metabolism: it produces dUMP, the immediate precursor of thymidine nucleotides and it decreases the intracellular concentration of dUTP so that uracil cannot be incorporated into DNA. The polypeptide is Deoxyuridine 5'-triphosphate nucleotidohydrolase (OPG046) (Camelus).